We begin with the raw amino-acid sequence, 342 residues long: Anthranilate phosphoribosyltransferase (342 aa).

Residues Gly90, 93–94 (GS), Thr98, 100–103 (NIST), 118–126 (KHGNRRATS), and Ser130 contribute to the 5-phospho-alpha-D-ribose 1-diphosphate site. Gly90 is a binding site for anthranilate. Ser102 provides a ligand contact to Mg(2+). Asn121 provides a ligand contact to anthranilate. Position 176 (Arg176) interacts with anthranilate. Residues Asp235 and Glu236 each contribute to the Mg(2+) site.

The protein belongs to the anthranilate phosphoribosyltransferase family. Homodimer. It depends on Mg(2+) as a cofactor.

It carries out the reaction N-(5-phospho-beta-D-ribosyl)anthranilate + diphosphate = 5-phospho-alpha-D-ribose 1-diphosphate + anthranilate. Its pathway is amino-acid biosynthesis; L-tryptophan biosynthesis; L-tryptophan from chorismate: step 2/5. Functionally, catalyzes the transfer of the phosphoribosyl group of 5-phosphorylribose-1-pyrophosphate (PRPP) to anthranilate to yield N-(5'-phosphoribosyl)-anthranilate (PRA). The chain is Anthranilate phosphoribosyltransferase from Rhodopirellula baltica (strain DSM 10527 / NCIMB 13988 / SH1).